Here is an 85-residue protein sequence, read N- to C-terminus: Large ribosomal subunit protein bL27 (85 aa).

Residues 1–22 are disordered; the sequence is MAHKKAGGSTRNGRDSESKRLG.

The protein belongs to the bacterial ribosomal protein bL27 family.

This chain is Large ribosomal subunit protein bL27, found in Teredinibacter turnerae (strain ATCC 39867 / T7901).